The sequence spans 407 residues: Tryptophan synthase beta chain (407 aa).

The residue at position 91 (K91) is an N6-(pyridoxal phosphate)lysine.

The protein belongs to the TrpB family. Tetramer of two alpha and two beta chains. The cofactor is pyridoxal 5'-phosphate.

It catalyses the reaction (1S,2R)-1-C-(indol-3-yl)glycerol 3-phosphate + L-serine = D-glyceraldehyde 3-phosphate + L-tryptophan + H2O. It participates in amino-acid biosynthesis; L-tryptophan biosynthesis; L-tryptophan from chorismate: step 5/5. Its function is as follows. The beta subunit is responsible for the synthesis of L-tryptophan from indole and L-serine. The chain is Tryptophan synthase beta chain from Streptococcus pneumoniae (strain P1031).